We begin with the raw amino-acid sequence, 236 residues long: Phosphoribosylaminoimidazole-succinocarboxamide synthase (236 aa).

This sequence belongs to the SAICAR synthetase family.

It catalyses the reaction 5-amino-1-(5-phospho-D-ribosyl)imidazole-4-carboxylate + L-aspartate + ATP = (2S)-2-[5-amino-1-(5-phospho-beta-D-ribosyl)imidazole-4-carboxamido]succinate + ADP + phosphate + 2 H(+). The protein operates within purine metabolism; IMP biosynthesis via de novo pathway; 5-amino-1-(5-phospho-D-ribosyl)imidazole-4-carboxamide from 5-amino-1-(5-phospho-D-ribosyl)imidazole-4-carboxylate: step 1/2. This Chlorobium limicola (strain DSM 245 / NBRC 103803 / 6330) protein is Phosphoribosylaminoimidazole-succinocarboxamide synthase.